We begin with the raw amino-acid sequence, 356 residues long: Phosphoserine aminotransferase (356 aa).

Arg-41 serves as a coordination point for L-glutamate. Residues 75–76 (AT), Trp-100, Thr-147, Asp-166, and Gln-189 contribute to the pyridoxal 5'-phosphate site. At Lys-190 the chain carries N6-(pyridoxal phosphate)lysine. 227–228 (NT) contacts pyridoxal 5'-phosphate.

This sequence belongs to the class-V pyridoxal-phosphate-dependent aminotransferase family. SerC subfamily. In terms of assembly, homodimer. Pyridoxal 5'-phosphate serves as cofactor.

Its subcellular location is the cytoplasm. The catalysed reaction is O-phospho-L-serine + 2-oxoglutarate = 3-phosphooxypyruvate + L-glutamate. It carries out the reaction 4-(phosphooxy)-L-threonine + 2-oxoglutarate = (R)-3-hydroxy-2-oxo-4-phosphooxybutanoate + L-glutamate. Its pathway is amino-acid biosynthesis; L-serine biosynthesis; L-serine from 3-phospho-D-glycerate: step 2/3. In terms of biological role, catalyzes the reversible conversion of 3-phosphohydroxypyruvate to phosphoserine and of 3-hydroxy-2-oxo-4-phosphonooxybutanoate to phosphohydroxythreonine. The chain is Phosphoserine aminotransferase from Exiguobacterium sp. (strain ATCC BAA-1283 / AT1b).